The following is a 137-amino-acid chain: uncharacterized protein (137 aa).

The N-terminal stretch at 1-34 (MAALSRALGPLRTPAPPLWIGLFLVATGSQQSLA) is a signal peptide. Positions 33-45 (LAQPLPGNTTEAT) are enriched in polar residues. Disordered regions lie at residues 33–54 (LAQP…ASGS) and 98–137 (VLSP…LGAS). The N-linked (GlcNAc...) asparagine glycan is linked to Asn40. The segment covering 121-137 (KLKEPQPQDHKPGLGAS) has biased composition (basic and acidic residues).

It localises to the secreted. This is an uncharacterized protein from Homo sapiens (Human).